We begin with the raw amino-acid sequence, 344 residues long: Phosphate acyltransferase (344 aa).

The protein belongs to the PlsX family. In terms of assembly, homodimer. Probably interacts with PlsY.

The protein resides in the cytoplasm. The catalysed reaction is a fatty acyl-[ACP] + phosphate = an acyl phosphate + holo-[ACP]. It participates in lipid metabolism; phospholipid metabolism. Functionally, catalyzes the reversible formation of acyl-phosphate (acyl-PO(4)) from acyl-[acyl-carrier-protein] (acyl-ACP). This enzyme utilizes acyl-ACP as fatty acyl donor, but not acyl-CoA. This Cronobacter sakazakii (strain ATCC BAA-894) (Enterobacter sakazakii) protein is Phosphate acyltransferase.